The sequence spans 323 residues: Homocysteine S-methyltransferase 1 (323 aa).

Residues V3–L317 form the Hcy-binding domain. Zn(2+) contacts are provided by C235, C302, and C303.

As to quaternary structure, monomer. It depends on Zn(2+) as a cofactor.

The enzyme catalyses S-methyl-L-methionine + L-homocysteine = 2 L-methionine + H(+). In terms of biological role, catalyzes methyl transfer from S-methylmethionine (SMM) to adenosyl-L-homocysteine (AdoMet). SMM degradation (by HMT-1, HMT-2, HMT-3 and HMT-4) and biosynthesis (by MMT1) constitute the SMM cycle in plants, which is probably required to achieve short term control of AdoMet level. The chain is Homocysteine S-methyltransferase 1 (HMT-1) from Zea mays (Maize).